A 274-amino-acid polypeptide reads, in one-letter code: NAD(P)H dehydrogenase [quinone] 1 (274 aa).

Alanine 2 carries the N-acetylalanine modification. Residues histidine 12, 18 to 19 (FN), and glutamine 67 contribute to the FAD site. Serine 82 bears the Phosphoserine mark. 104-107 (LYWF) is a binding site for FAD. 126–128 (AYT) is a binding site for substrate. FAD-binding positions include 148–151 (TTGG), tyrosine 156, and arginine 201. The interval 225–274 (PSSLFDLNFQAGFLLKKEVQEEQKKNKFGLSVGHHLGKSIPADNQIKARK) is important for apoenzyme conformational stability. Lysine 251 is covalently cross-linked (Glycyl lysine isopeptide (Lys-Gly) (interchain with G-Cter in SUMO2)).

The protein belongs to the NAD(P)H dehydrogenase (quinone) family. As to quaternary structure, homodimer. Interacts with PDLIM4 isoform 2; this interaction stabilizes PDLIM4 isoform 2 in response to oxidative stress and protects it from ubiquitin-independent degradation by the core 20S proteasome. Interacts with TP73 (via SAM domain); this interaction is NADH-dependent, stabilizes TP73 in response to oxidative stress and protects it from ubiquitin-independent degradation by the 20S proteasome. Interacts with TP53; this interaction is NADH-dependent, stabilizes TP53 in response to oxidative stress and protects it from ubiquitin-independent degradation by the 20S proteasome. Requires FAD as cofactor.

Its subcellular location is the cytoplasm. It is found in the cytosol. The enzyme catalyses a quinone + NADH + H(+) = a quinol + NAD(+). It catalyses the reaction a quinone + NADPH + H(+) = a quinol + NADP(+). It carries out the reaction ubiquinone-10 + NADH + H(+) = ubiquinol-10 + NAD(+). The catalysed reaction is menadione + NADH + H(+) = menadiol + NAD(+). Flavin-containing quinone reductase that catalyzes two-electron reduction of quinones to hydroquinones using either NADH or NADPH as electron donors. In a ping-pong kinetic mechanism, the electrons are sequentially transferred from NAD(P)H to flavin cofactor and then from reduced flavin to the quinone, bypassing the formation of semiquinone and reactive oxygen species. Regulates cellular redox state primarily through quinone detoxification. Reduces components of plasma membrane redox system such as coenzyme Q and vitamin quinones, producing antioxidant hydroquinone forms. In the process may function as superoxide scavenger to prevent hydroquinone oxidation and facilitate excretion. Alternatively, can activate quinones and their derivatives by generating redox reactive hydroquinones with DNA cross-linking antitumor potential. Acts as a gatekeeper of the core 20S proteasome known to degrade proteins with unstructured regions. Upon oxidative stress, interacts with tumor suppressors TP53 and TP73 in a NADH-dependent way and inhibits their ubiquitin-independent degradation by the 20S proteasome. The chain is NAD(P)H dehydrogenase [quinone] 1 (Nqo1) from Rattus norvegicus (Rat).